A 218-amino-acid polypeptide reads, in one-letter code: 3,4-dihydroxy-2-butanone 4-phosphate synthase (218 aa).

Residues 38 to 39, Asp-43, 151 to 155, and Glu-175 contribute to the D-ribulose 5-phosphate site; these read RE and RRGHT. Mg(2+) is bound at residue Glu-39. His-154 serves as a coordination point for Mg(2+).

This sequence belongs to the DHBP synthase family. As to quaternary structure, homodimer. The cofactor is Mg(2+). It depends on Mn(2+) as a cofactor.

It carries out the reaction D-ribulose 5-phosphate = (2S)-2-hydroxy-3-oxobutyl phosphate + formate + H(+). Its pathway is cofactor biosynthesis; riboflavin biosynthesis; 2-hydroxy-3-oxobutyl phosphate from D-ribulose 5-phosphate: step 1/1. Functionally, catalyzes the conversion of D-ribulose 5-phosphate to formate and 3,4-dihydroxy-2-butanone 4-phosphate. This chain is 3,4-dihydroxy-2-butanone 4-phosphate synthase, found in Vibrio vulnificus (strain CMCP6).